A 145-amino-acid polypeptide reads, in one-letter code: Ribonuclease VapC7 (145 aa).

Residues 2 to 129 (IVLDTTVLVY…PAFADLSDVV (128 aa)) form the PINc domain. The Mg(2+) site is built by Asp-5 and Asp-100.

The protein belongs to the PINc/VapC protein family. Mg(2+) serves as cofactor.

Functionally, toxic component of a type II toxin-antitoxin (TA) system. An RNase. The cognate antitoxin is VapB7. The polypeptide is Ribonuclease VapC7 (Mycobacterium tuberculosis (strain ATCC 25618 / H37Rv)).